Here is a 183-residue protein sequence, read N- to C-terminus: ATP synthase subunit delta (183 aa).

This sequence belongs to the ATPase delta chain family. As to quaternary structure, F-type ATPases have 2 components, F(1) - the catalytic core - and F(0) - the membrane proton channel. F(1) has five subunits: alpha(3), beta(3), gamma(1), delta(1), epsilon(1). F(0) has three main subunits: a(1), b(2) and c(10-14). The alpha and beta chains form an alternating ring which encloses part of the gamma chain. F(1) is attached to F(0) by a central stalk formed by the gamma and epsilon chains, while a peripheral stalk is formed by the delta and b chains.

The protein localises to the cell inner membrane. F(1)F(0) ATP synthase produces ATP from ADP in the presence of a proton or sodium gradient. F-type ATPases consist of two structural domains, F(1) containing the extramembraneous catalytic core and F(0) containing the membrane proton channel, linked together by a central stalk and a peripheral stalk. During catalysis, ATP synthesis in the catalytic domain of F(1) is coupled via a rotary mechanism of the central stalk subunits to proton translocation. In terms of biological role, this protein is part of the stalk that links CF(0) to CF(1). It either transmits conformational changes from CF(0) to CF(1) or is implicated in proton conduction. The polypeptide is ATP synthase subunit delta (Rickettsia prowazekii (strain Madrid E)).